The chain runs to 200 residues: Lipopolysaccharide core heptose(II)-phosphate phosphatase (200 aa).

A signal peptide spans 1–25 (MLAFCRSSLKSKKYFIILLALAAIA).

It belongs to the phosphoglycerate mutase family. Ais subfamily.

The protein localises to the periplasm. It functions in the pathway bacterial outer membrane biogenesis; lipopolysaccharide metabolism. Catalyzes the dephosphorylation of heptose(II) of the outer membrane lipopolysaccharide core. This Escherichia coli O157:H7 protein is Lipopolysaccharide core heptose(II)-phosphate phosphatase.